Reading from the N-terminus, the 155-residue chain is SsrA-binding protein (155 aa).

Residues 132–147 (KRESIKRREQDRDIKR) show a composition bias toward basic and acidic residues. The segment at 132–155 (KRESIKRREQDRDIKRQMKQFNGR) is disordered.

The protein belongs to the SmpB family.

Its subcellular location is the cytoplasm. In terms of biological role, required for rescue of stalled ribosomes mediated by trans-translation. Binds to transfer-messenger RNA (tmRNA), required for stable association of tmRNA with ribosomes. tmRNA and SmpB together mimic tRNA shape, replacing the anticodon stem-loop with SmpB. tmRNA is encoded by the ssrA gene; the 2 termini fold to resemble tRNA(Ala) and it encodes a 'tag peptide', a short internal open reading frame. During trans-translation Ala-aminoacylated tmRNA acts like a tRNA, entering the A-site of stalled ribosomes, displacing the stalled mRNA. The ribosome then switches to translate the ORF on the tmRNA; the nascent peptide is terminated with the 'tag peptide' encoded by the tmRNA and targeted for degradation. The ribosome is freed to recommence translation, which seems to be the essential function of trans-translation. This is SsrA-binding protein from Streptococcus mutans serotype c (strain ATCC 700610 / UA159).